A 529-amino-acid polypeptide reads, in one-letter code: tRNA-2-methylthio-N(6)-dimethylallyladenosine synthase 1 (529 aa).

A disordered region spans residues 1-21; that stretch reads MTQDHIVTERPPATRNDTAGN. The 117-residue stretch at 25–141 folds into the MTTase N-terminal domain; sequence RTYEVRTLGC…LPVLLERSRH (117 aa). Residues C34, C70, C104, C178, C182, and C185 each contribute to the [4Fe-4S] cluster site. Residues 164–407 form the Radical SAM core domain; that stretch reads RDSAYAAWVS…VALQERISLE (244 aa). One can recognise a TRAM domain in the interval 410–480; that stretch reads RSLVGTRQEL…PHHLIADGPL (71 aa). The disordered stretch occupies residues 481-504; the sequence is LQHRRTPAGDASERGQTPTTRGVG.

This sequence belongs to the methylthiotransferase family. MiaB subfamily. In terms of assembly, monomer. The cofactor is [4Fe-4S] cluster.

It is found in the cytoplasm. It carries out the reaction N(6)-dimethylallyladenosine(37) in tRNA + (sulfur carrier)-SH + AH2 + 2 S-adenosyl-L-methionine = 2-methylsulfanyl-N(6)-dimethylallyladenosine(37) in tRNA + (sulfur carrier)-H + 5'-deoxyadenosine + L-methionine + A + S-adenosyl-L-homocysteine + 2 H(+). Functionally, catalyzes the methylthiolation of N6-(dimethylallyl)adenosine (i(6)A), leading to the formation of 2-methylthio-N6-(dimethylallyl)adenosine (ms(2)i(6)A) at position 37 in tRNAs that read codons beginning with uridine. The chain is tRNA-2-methylthio-N(6)-dimethylallyladenosine synthase 1 from Mycobacterium marinum (strain ATCC BAA-535 / M).